We begin with the raw amino-acid sequence, 411 residues long: Exodeoxyribonuclease 7 large subunit (411 aa).

Belongs to the XseA family. Heterooligomer composed of large and small subunits.

The protein resides in the cytoplasm. The enzyme catalyses Exonucleolytic cleavage in either 5'- to 3'- or 3'- to 5'-direction to yield nucleoside 5'-phosphates.. Bidirectionally degrades single-stranded DNA into large acid-insoluble oligonucleotides, which are then degraded further into small acid-soluble oligonucleotides. This Mycobacterium sp. (strain JLS) protein is Exodeoxyribonuclease 7 large subunit.